The chain runs to 274 residues: HTH-type transcriptional regulator GadX (274 aa).

One can recognise an HTH araC/xylS-type domain in the interval 145–242 (TRVCTVINNN…GMTPTEYQER (98 aa)). 2 DNA-binding regions (H-T-H motif) span residues 162–183 (ARIA…REEE) and 209–232 (IKRV…RNYY).

Homodimer.

Functionally, positively regulates the expression of about fifteen genes involved in acid resistance such as gadA, gadB and gadC. Depending on the conditions (growth phase and medium), can repress gadW. The protein is HTH-type transcriptional regulator GadX (gadX) of Escherichia coli O157:H7.